Reading from the N-terminus, the 426-residue chain is Proline--tRNA ligase (426 aa).

Belongs to the class-II aminoacyl-tRNA synthetase family. ProS type 2 subfamily. As to quaternary structure, homodimer.

It localises to the cytoplasm. The enzyme catalyses tRNA(Pro) + L-proline + ATP = L-prolyl-tRNA(Pro) + AMP + diphosphate. Catalyzes the attachment of proline to tRNA(Pro) in a two-step reaction: proline is first activated by ATP to form Pro-AMP and then transferred to the acceptor end of tRNA(Pro). In Rickettsia peacockii (strain Rustic), this protein is Proline--tRNA ligase.